The sequence spans 65 residues: Carboxypeptidase A inhibitor (65 aa).

Belongs to the protease inhibitor I44 family.

Its subcellular location is the secreted. Functionally, inhibits carboxypeptidase A. The polypeptide is Carboxypeptidase A inhibitor (Ascaris suum (Pig roundworm)).